Consider the following 160-residue polypeptide: G-protein-signaling modulator 3 (160 aa).

The tract at residues 1–55 is disordered; the sequence is MEAERPQEEEDGEQGPPQDEEGWPPPNSTTRPWRSAPPSPPPPGTRHTALGPRSA. Residues 7–22 show a composition bias toward acidic residues; it reads QEEEDGEQGPPQDEEG. Residues serine 35, serine 39, serine 56, and serine 59 each carry the phosphoserine modification. The segment covering 35-44 has biased composition (pro residues); it reads SAPPSPPPPG. Threonine 62 carries the phosphothreonine modification. GoLoco domains are found at residues 62–84, 104–126, and 132–155; these read TELLLDLVAEAQSRRLEEQRATF, REQLYSTILSHQCQRMEAQRSEP, and GQELLELLLRVQGGGRMEEQRSRP.

As to expression, expressed in heart, placenta, lung and liver.

The protein localises to the cytoplasm. Interacts with subunit of G(i) alpha proteins and regulates the activation of G(i) alpha proteins. The sequence is that of G-protein-signaling modulator 3 (GPSM3) from Homo sapiens (Human).